The sequence spans 123 residues: Small ribosomal subunit protein eS8 (123 aa).

Residues 1–38 (MKDQGRSPRKRTGGRRRPNHKKKKHELGKDTVETQVGE) are disordered. Residues 7–26 (SPRKRTGGRRRPNHKKKKHE) show a composition bias toward basic residues.

In terms of assembly, part of the 30S ribosomal subunit.

In Haloarcula marismortui (strain ATCC 43049 / DSM 3752 / JCM 8966 / VKM B-1809) (Halobacterium marismortui), this protein is Small ribosomal subunit protein eS8 (rps8e).